We begin with the raw amino-acid sequence, 257 residues long: 5'-nucleotidase SurE (257 aa).

A divalent metal cation is bound by residues Asp-11, Asp-12, Ser-42, and Asn-99.

Belongs to the SurE nucleotidase family. A divalent metal cation serves as cofactor.

The protein resides in the cytoplasm. It catalyses the reaction a ribonucleoside 5'-phosphate + H2O = a ribonucleoside + phosphate. In terms of biological role, nucleotidase that shows phosphatase activity on nucleoside 5'-monophosphates. The protein is 5'-nucleotidase SurE of Flavobacterium psychrophilum (strain ATCC 49511 / DSM 21280 / CIP 103535 / JIP02/86).